The chain runs to 595 residues: NADPH-dependent diflavin oxidoreductase 1 (595 aa).

The region spanning Val6 to Trp150 is the Flavodoxin-like domain. FMN-binding positions include Ser12–Ala17, Ala59–Gly62, Leu97–Asn106, and Asp132. The region spanning Leu204 to Pro444 is the FAD-binding FR-type domain. FAD contacts are provided by residues Arg348, Arg380–Ser383, and Gly414–Ser417. NADP(+) contacts are provided by residues Thr458, Ser513 to Arg514, and Lys519 to Gln523. Residue Trp594 participates in FAD binding.

It belongs to the NADPH-dependent diflavin oxidoreductase NDOR1 family. This sequence in the N-terminal section; belongs to the flavodoxin family. In the C-terminal section; belongs to the flavoprotein pyridine nucleotide cytochrome reductase family. In terms of assembly, interacts with ciapin1; as part of the cytosolic iron-sulfur (Fe-S) protein assembly (CIA) machinery. It depends on FAD as a cofactor. FMN is required as a cofactor.

The protein resides in the cytoplasm. Its subcellular location is the perinuclear region. The catalysed reaction is 2 oxidized [2Fe-2S]-[protein] + NADPH = 2 reduced [2Fe-2S]-[protein] + NADP(+) + H(+). NADPH-dependent reductase which is a central component of the cytosolic iron-sulfur (Fe-S) protein assembly (CIA) machinery. Transfers electrons from NADPH via its FAD and FMN prosthetic groups to the [2Fe-2S] cluster of ciapin1, another key component of the CIA machinery. In turn, this reduced cluster provides electrons for assembly of cytosolic iron-sulfur cluster proteins. It can also reduce the [2Fe-2S] cluster of cisd1 and activate this protein implicated in Fe/S cluster repair. In Danio rerio (Zebrafish), this protein is NADPH-dependent diflavin oxidoreductase 1.